The following is a 290-amino-acid chain: L-proline cis-3-hydroxylase 1 (290 aa).

3 residues coordinate Fe cation: histidine 107, aspartate 109, and histidine 158. Position 168 (arginine 168) interacts with 2-oxoglutarate.

Belongs to the L-proline cis-4-/cis-3-hydroxylase family. Homodimer. Requires Fe(2+) as cofactor.

The enzyme catalyses L-proline + 2-oxoglutarate + O2 = cis-3-hydroxy-L-proline + succinate + CO2. With respect to regulation, inhibited by metal ions such as Co(2+), Zn(2+), Ni(2+) or Cu(2+). Is also inhibited by EDTA in vitro. Unlike the procollagen-proline cis-3- and trans-4-hydroxylases from mammals, does not necessarily require L-ascorbate for activity although it does increase the activity of the enzyme. Its function is as follows. Dioxygenase that catalyzes the 2-oxoglutarate-dependent selective hydroxylation of free L-proline to cis-3-hydroxy-L-proline (cis-3-Hyp). D-proline, trans-4-hydroxy-L-proline, cis-4-hydroxy-L-proline, cis-4-hydroxy-D-proline, and 3,4-dehydro-DL-proline are not substrates. The chain is L-proline cis-3-hydroxylase 1 from Streptomyces sp.